The sequence spans 280 residues: MKQVFGVFGDPVGHSLSPAMHNAAFSALGMDCIYHAFRVTPEKLEKAILGAEAMGFGGINLTVPLKEKALKLDFVKPDPLAKRIGAVNTLVFGKKGDIQGYNTDGPGAKQALLDTGVEIRGSRMVVAGAGGAARAVAFQLAADGADITVINRTEERAVGLAREISAADLPGKIRGTGLSGLKELLRDADVLINTTTLGMHPNTDATIVTAEELHSGLTVFDIVYNPLETRLLREARTSGAKTISGVLMLVYQGAEAFRLWTGVEPPLELMKKTVLEALQA.

Residues 15-17 (SLS) and Thr62 each bind shikimate. Lys66 serves as the catalytic Proton acceptor. Asn88 and Asp104 together coordinate shikimate. Residues 128–132 (GAGGA), 151–156 (NRTEER), and Ile222 contribute to the NADP(+) site. A shikimate-binding site is contributed by Tyr224. NADP(+) is bound at residue Gly245.

The protein belongs to the shikimate dehydrogenase family. Homodimer.

It catalyses the reaction shikimate + NADP(+) = 3-dehydroshikimate + NADPH + H(+). It participates in metabolic intermediate biosynthesis; chorismate biosynthesis; chorismate from D-erythrose 4-phosphate and phosphoenolpyruvate: step 4/7. Functionally, involved in the biosynthesis of the chorismate, which leads to the biosynthesis of aromatic amino acids. Catalyzes the reversible NADPH linked reduction of 3-dehydroshikimate (DHSA) to yield shikimate (SA). In Methanosarcina mazei (strain ATCC BAA-159 / DSM 3647 / Goe1 / Go1 / JCM 11833 / OCM 88) (Methanosarcina frisia), this protein is Shikimate dehydrogenase (NADP(+)).